Reading from the N-terminus, the 1395-residue chain is Adventurous-gliding motility protein Z (1395 aa).

The Response regulatory domain occupies 4-122 (RVLIVESEHD…ELAALSHGIV (119 aa)). The residue at position 48 (D48) is a 4-aspartylphosphate. Disordered regions lie at residues 137-172 (LNGT…AMTE), 874-893 (AAES…GLRS), 919-947 (EQHA…ARAH), 1212-1249 (AAES…AAKQ), 1287-1312 (RYKS…EDDE), and 1326-1395 (AAAA…ELDK). A coiled-coil region spans residues 213 to 911 (EGKIQILRDE…LEQTHGQLAA (699 aa)). 2 stretches are compositionally biased toward basic and acidic residues: residues 919–928 (EQHAHQESRK) and 1228–1249 (QKER…AAKQ). Low complexity-rich tracts occupy residues 1291–1306 (KSAT…AKPA) and 1326–1352 (AAAA…KKAP). Residues 1382 to 1395 (EDDDWTALVDELDK) show a composition bias toward acidic residues.

As to quaternary structure, interacts with MglA.

It localises to the cytoplasm. In terms of biological role, required for adventurous-gliding motility (A motility), in response to environmental signals sensed by the frz chemosensory system. Forms ordered clusters that span the cell length and that remain stationary relative to the surface across which the cells move, serving as anchor points (focal, transient adhesion sites) that allow the bacterium to move forward. Clusters disassemble at the lagging cell pole. The chain is Adventurous-gliding motility protein Z (aglZ) from Myxococcus xanthus (strain DK1622).